Here is a 657-residue protein sequence, read N- to C-terminus: Methionine--tRNA ligase (657 aa).

A 'HIGH' region motif is present at residues 13–23 (YYPSGNLHIGH). The short motif at 308–312 (KMSKS) is the 'KMSKS' region element. Lys311 is a binding site for ATP. Residues 557-657 (DFDKVEIKAA…SAIPNGAVIK (101 aa)) form the tRNA-binding domain.

It belongs to the class-I aminoacyl-tRNA synthetase family. MetG type 2B subfamily. Homodimer.

The protein localises to the cytoplasm. It catalyses the reaction tRNA(Met) + L-methionine + ATP = L-methionyl-tRNA(Met) + AMP + diphosphate. Its function is as follows. Is required not only for elongation of protein synthesis but also for the initiation of all mRNA translation through initiator tRNA(fMet) aminoacylation. This Staphylococcus aureus (strain MRSA252) protein is Methionine--tRNA ligase.